Consider the following 430-residue polypeptide: Enolase (430 aa).

Residue Q164 coordinates (2R)-2-phosphoglycerate. The active-site Proton donor is E208. Residues D245, E288, and D315 each coordinate Mg(2+). Residues K340, R369, S370, and K391 each contribute to the (2R)-2-phosphoglycerate site. Catalysis depends on K340, which acts as the Proton acceptor.

This sequence belongs to the enolase family. Mg(2+) serves as cofactor.

It is found in the cytoplasm. The protein resides in the secreted. Its subcellular location is the cell surface. The enzyme catalyses (2R)-2-phosphoglycerate = phosphoenolpyruvate + H2O. It participates in carbohydrate degradation; glycolysis; pyruvate from D-glyceraldehyde 3-phosphate: step 4/5. Functionally, catalyzes the reversible conversion of 2-phosphoglycerate (2-PG) into phosphoenolpyruvate (PEP). It is essential for the degradation of carbohydrates via glycolysis. This chain is Enolase, found in Thermococcus gammatolerans (strain DSM 15229 / JCM 11827 / EJ3).